Here is a 37-residue protein sequence, read N- to C-terminus: ESDGAHAKARADKPARSATNRQPGCCNNPACVKHRCG.

Residues 1–15 are compositionally biased toward basic and acidic residues; sequence ESDGAHAKARADKPA. The propeptide occupies 1 to 22; the sequence is ESDGAHAKARADKPARSATNRQ. The interval 1–23 is disordered; that stretch reads ESDGAHAKARADKPARSATNRQP. Intrachain disulfides connect C25–C31 and C26–C36. Cysteine amide is present on C36.

It belongs to the conotoxin A superfamily. As to expression, expressed by the venom duct.

The protein resides in the secreted. Alpha-conotoxins act on postsynaptic membranes, they bind to the nicotinic acetylcholine receptors (nAChR) and thus inhibit them. This toxin inhibits high voltage-activated (HVA) calcium channel currents in rat DRG neurons (13% inhibition at 1 uM toxin) probably by activating GABA(B) receptors (GABBR1 and/or GABBR2). This Conus kinoshitai (Kinoshita's cone) protein is Alpha-conotoxin-like Kn1.2.